Here is a 519-residue protein sequence, read N- to C-terminus: MAQTETQEKKGLGRKVQAFGSFLSSMIMPNIGAFIAWGFIAAIFIDNGWYPNKELSQLAGPMITYLIPLLIAFSGGRLIHDLRGGIVAATATMGVIVALPDTPMLLGAMIMGPLVGWLMKKVDQFLQPRTPQGFEMLFNNFSAGILAFIMTILGFKLLAPIMQFIMHILSVAVEFLVHLHLLPIVSIIVEPAKILFLNNAINHGVFTPLGTDQAASAGQSILFAIESNPGPGIGILLAYMIFGKGTAKATSYGAGIIHFFGGIHEIYFPYVLMRPLLFIAVILGGMTGVATYQATGFGFKSPASPGSFIVYCLNAPKGEFLHMVLGVFLAALVSFVVAALIMKFTKEPKQDLEAATAKMESTKGKKSSVSSKLTGATTGTGAAGVAANKANGEDQNEASSEDEEEDLLDNYNTEDVDAHDYSNVDHVIFACDAGMGSSAMGASMLRNKFKKAGISDVNVTNTAINQLPNNAQLVITQKTLTDRAIKQVPNAIHISVDNFLNSPRYEELLNNLKKDQDKA.

Over 1-30 (MAQTETQEKKGLGRKVQAFGSFLSSMIMPN) the chain is Cytoplasmic. The 333-residue stretch at 19-351 (FGSFLSSMIM…MKFTKEPKQD (333 aa)) folds into the PTS EIIC type-2 domain. The helical transmembrane segment at 31-52 (IGAFIAWGFIAAIFIDNGWYPN) threads the bilayer. Over 53–56 (KELS) the chain is Extracellular. The helical transmembrane segment at 57 to 77 (QLAGPMITYLIPLLIAFSGGR) threads the bilayer. The Cytoplasmic portion of the chain corresponds to 78–141 (LIHDLRGGIV…QGFEMLFNNF (64 aa)). Residues 142 to 163 (SAGILAFIMTILGFKLLAPIMQ) traverse the membrane as a helical segment. Residues 164–172 (FIMHILSVA) are Extracellular-facing. Residues 173–193 (VEFLVHLHLLPIVSIIVEPAK) traverse the membrane as a helical segment. At 194-280 (ILFLNNAINH…VLMRPLLFIA (87 aa)) the chain is on the cytoplasmic side. A helical transmembrane segment spans residues 281–300 (VILGGMTGVATYQATGFGFK). Topologically, residues 301 to 320 (SPASPGSFIVYCLNAPKGEF) are extracellular. Residues 321–342 (LHMVLGVFLAALVSFVVAALIM) form a helical membrane-spanning segment. Topologically, residues 343-519 (KFTKEPKQDL…NNLKKDQDKA (177 aa)) are cytoplasmic. The tract at residues 366–406 (KSSVSSKLTGATTGTGAAGVAANKANGEDQNEASSEDEEED) is disordered. Residues 367–387 (SSVSSKLTGATTGTGAAGVAA) show a composition bias toward low complexity. Acidic residues predominate over residues 394–406 (DQNEASSEDEEED). Residues 425–519 (DHVIFACDAG…NNLKKDQDKA (95 aa)) enclose the PTS EIIB type-2 domain. The active-site Phosphocysteine intermediate; for EIIB activity is C431. C431 carries the phosphocysteine; by EIIA modification.

As to quaternary structure, homodimer.

It localises to the cell membrane. It catalyses the reaction D-mannitol(out) + N(pros)-phospho-L-histidyl-[protein] = D-mannitol 1-phosphate(in) + L-histidyl-[protein]. The phosphoenolpyruvate-dependent sugar phosphotransferase system (sugar PTS), a major carbohydrate active transport system, catalyzes the phosphorylation of incoming sugar substrates concomitantly with their translocation across the cell membrane. The enzyme II CmtAB PTS system is involved in D-mannitol transport. This is PTS system mannitol-specific EIICB component (mtlA) from Staphylococcus haemolyticus (strain JCSC1435).